The following is an 85-amino-acid chain: Small ribosomal subunit protein uS17 (85 aa).

The protein belongs to the universal ribosomal protein uS17 family. Part of the 30S ribosomal subunit.

In terms of biological role, one of the primary rRNA binding proteins, it binds specifically to the 5'-end of 16S ribosomal RNA. The sequence is that of Small ribosomal subunit protein uS17 from Agathobacter rectalis (strain ATCC 33656 / DSM 3377 / JCM 17463 / KCTC 5835 / VPI 0990) (Eubacterium rectale).